An 83-amino-acid chain; its full sequence is Large ribosomal subunit protein uL24 (83 aa).

This sequence belongs to the universal ribosomal protein uL24 family. As to quaternary structure, part of the 50S ribosomal subunit.

Functionally, one of two assembly initiator proteins, it binds directly to the 5'-end of the 23S rRNA, where it nucleates assembly of the 50S subunit. One of the proteins that surrounds the polypeptide exit tunnel on the outside of the subunit. The polypeptide is Large ribosomal subunit protein uL24 (Symbiobacterium thermophilum (strain DSM 24528 / JCM 14929 / IAM 14863 / T)).